The chain runs to 113 residues: PTS system fructose-like EIIB component 3 (113 aa).

The PTS EIIB type-2 domain occupies 1-100 (MAYLVAVTAC…PQRVMSAVRK (100 aa)). Cys10 (phosphocysteine intermediate) is an active-site residue. Cys10 is subject to Phosphocysteine; by EIIA.

Its subcellular location is the cytoplasm. The catalysed reaction is D-fructose(out) + N(pros)-phospho-L-histidyl-[protein] = D-fructose 1-phosphate(in) + L-histidyl-[protein]. In terms of biological role, the phosphoenolpyruvate-dependent sugar phosphotransferase system (sugar PTS), a major carbohydrate active transport system, catalyzes the phosphorylation of incoming sugar substrates concomitantly with their translocation across the cell membrane. The polypeptide is PTS system fructose-like EIIB component 3 (frwD) (Escherichia coli (strain K12)).